A 108-amino-acid chain; its full sequence is UPF0235 protein RB8260 (108 aa).

The protein belongs to the UPF0235 family.

The chain is UPF0235 protein RB8260 from Rhodopirellula baltica (strain DSM 10527 / NCIMB 13988 / SH1).